We begin with the raw amino-acid sequence, 420 residues long: 3-oxoacyl-[acyl-carrier-protein] synthase 2 (420 aa).

A Ketosynthase family 3 (KS3) domain is found at 13–419 (FPNVVVTGIA…GHNVAIAFGC (407 aa)). Residues Cys-173, His-314, and His-349 each act as for beta-ketoacyl synthase activity in the active site.

It belongs to the thiolase-like superfamily. Beta-ketoacyl-ACP synthases family.

It is found in the cytoplasm. It catalyses the reaction an ultra-long-chain di-unsaturated fatty acyl-[ACP] + malonyl-[ACP] + H(+) = a 3-oxo-ultra-long-chain di-unsaturated fatty acyl-[ACP] + holo-[ACP] + CO2. The protein operates within lipid metabolism; mycolic acid biosynthesis. Part of the mycobacterial fatty acid elongation system FAS-II, which is involved in mycolic acid biosynthesis. Catalyzes the elongation of long chain acyl-ACP substrates by the addition of two carbons from malonyl-ACP to an acyl acceptor. Involved in extension of the mycolate chains to full lengths and produces longer chain multiunsaturated hydrocarbons averaging 54 carbons in length. The sequence is that of 3-oxoacyl-[acyl-carrier-protein] synthase 2 (kasB) from Mycobacterium leprae (strain TN).